A 307-amino-acid polypeptide reads, in one-letter code: tRNA pseudouridine synthase B (307 aa).

The active-site Nucleophile is Asp-38.

It belongs to the pseudouridine synthase TruB family. Type 1 subfamily.

The catalysed reaction is uridine(55) in tRNA = pseudouridine(55) in tRNA. Functionally, responsible for synthesis of pseudouridine from uracil-55 in the psi GC loop of transfer RNAs. In Bacillus cytotoxicus (strain DSM 22905 / CIP 110041 / 391-98 / NVH 391-98), this protein is tRNA pseudouridine synthase B.